The following is a 194-amino-acid chain: dCTP deaminase (194 aa).

DCTP-binding positions include 110-115, Asp128, 136-138, Tyr171, Lys178, and Gln182; these read RSSLAR and VLE. Glu138 (proton donor/acceptor) is an active-site residue.

It belongs to the dCTP deaminase family. As to quaternary structure, homotrimer.

It catalyses the reaction dCTP + H2O + H(+) = dUTP + NH4(+). It functions in the pathway pyrimidine metabolism; dUMP biosynthesis; dUMP from dCTP (dUTP route): step 1/2. Catalyzes the deamination of dCTP to dUTP. This is dCTP deaminase from Histophilus somni (strain 2336) (Haemophilus somnus).